Reading from the N-terminus, the 155-residue chain is Ribonuclease H (155 aa).

Residues 1–146 (MNALFAWTDG…ADELARAGMA (146 aa)) enclose the RNase H type-1 domain. Positions 9, 52, 74, and 138 each coordinate Mg(2+).

This sequence belongs to the RNase H family. As to quaternary structure, monomer. The cofactor is Mg(2+).

It localises to the cytoplasm. The enzyme catalyses Endonucleolytic cleavage to 5'-phosphomonoester.. Functionally, endonuclease that specifically degrades the RNA of RNA-DNA hybrids. In Paracoccus denitrificans (strain Pd 1222), this protein is Ribonuclease H.